The sequence spans 870 residues: MOG interacting and ectopic P-granules protein 1 (870 aa).

The tract at residues 1–244 is disordered; sequence MVTADETVLA…VPEEDNNEQA (244 aa). The span at 9–20 shows a compositional bias: polar residues; that stretch reads LATTTNTTSMSV. The segment covering 41-51 has biased composition (basic and acidic residues); it reads EQLKAEQREVM. Acidic residues-rich tracts occupy residues 77–99, 129–142, and 203–214; these read EVIEIDDTEESTDPSPDGSDENG, IEQDDDGDVMEITE, and IELDDDDDDEIQ. C2H2-type zinc fingers lie at residues 421-444 and 450-473; these read HRCDVCGFQTESKLVMSTHKENLH and FQCTMCKETDTSEQRMKDHYFETH. A CCHC-type zinc finger spans residues 486 to 508; it reads YPCAICEEDFNFKGVREQHYKQC. Composition is skewed to polar residues over residues 673–688 and 695–708; these read LQAAVNSMRSQNSQKT and KLVTTPSHATVGSS. The segment at 673–708 is disordered; sequence LQAAVNSMRSQNSQKTPTHRSSKLVTTPSHATVGSS. 4 consecutive C2H2-type zinc fingers follow at residues 713–736, 753–776, 794–815, and 826–849; these read FVCEICDASVQEKEKYLQHLQTTH, LACSRCRDRFWTYEGLERHLVMSH, GRCKTCGKNYAFNMLQHLVADH, and YSCDVCAFKCSSYQTLEAHLTSNH. The disordered stretch occupies residues 847–870; it reads SNHPKGDKKTSTPAKKDDCITLDD. Positions 850–870 are enriched in basic and acidic residues; the sequence is PKGDKKTSTPAKKDDCITLDD.

As to quaternary structure, interacts with hda-1, let-418, lin-1, mog-1, mog-4, mog-5, mog-6, pie-1 and unc-98. Post-translationally, sumoylated. Expressed in somatic cells of embryos, the head, hypodermis and tail of larvae and the germline of adults, including oocytes but not mature sperm and spermatocytes.

The protein localises to the nucleus. Has a broad role in development, specifically in the genetic pathway SynMuvB that negatively regulates specification of the vulval cell fate. Required for fem-3 3'-UTR-mediated repression in the regulation of the sperm/oocyte switch. Acts by regulating the translation of fem-3 mRNA, by binding to its 3'-UTR. The sequence is that of MOG interacting and ectopic P-granules protein 1 from Caenorhabditis elegans.